The sequence spans 318 residues: Olfactory receptor 2T3 (318 aa).

Topologically, residues 1–30 (MCSGNQTSQNQTASTDFTLTGLFAESKHAA) are extracellular. N-linked (GlcNAc...) asparagine glycosylation is found at asparagine 5 and asparagine 10. Residues 31–54 (LLYTVTFLLFLMALTGNALLILLI) traverse the membrane as a helical segment. At 55 to 62 (HSEPRLHT) the chain is on the cytoplasmic side. The helical transmembrane segment at 63–84 (PMYFFISQLALMDLMYLCVTVP) threads the bilayer. The Extracellular segment spans residues 85–105 (KMLVGQVTGDDTISPSGCGIQ). Cysteines 102 and 194 form a disulfide. A helical transmembrane segment spans residues 106 to 125 (MFFYLTLAGAEVFLLAAMAY). The Cytoplasmic portion of the chain corresponds to 126 to 144 (DRYAAVCRPLHYPLLMNQR). A helical transmembrane segment spans residues 145–163 (VCQLLVSACWVLGMVDGLL). Residues 164-200 (LTPITMSFPFCQSRKILSFFCETPALLKLSCSDVSLY) lie on the Extracellular side of the membrane. A helical membrane pass occupies residues 201-224 (KTLMYLCCILMLLAPIMVISSSYT). The Cytoplasmic portion of the chain corresponds to 225 to 241 (LILHLIHRMNSAAGHRK). The helical transmembrane segment at 242 to 264 (ALATCSSHMIIVLLLFGASFYTY) threads the bilayer. The Extracellular portion of the chain corresponds to 265–277 (MLPSSYHTAEQDM). The chain crosses the membrane as a helical span at residues 278-297 (MVSAFYTIFTPVLNPLIYSL). Topologically, residues 298–318 (RNKDVTRALRSMMQSRMNQEK) are cytoplasmic.

It belongs to the G-protein coupled receptor 1 family.

Its subcellular location is the cell membrane. Odorant receptor. The polypeptide is Olfactory receptor 2T3 (OR2T3) (Homo sapiens (Human)).